The following is a 177-amino-acid chain: Large ribosomal subunit protein uL6 (177 aa).

The protein belongs to the universal ribosomal protein uL6 family. In terms of assembly, part of the 50S ribosomal subunit.

This protein binds to the 23S rRNA, and is important in its secondary structure. It is located near the subunit interface in the base of the L7/L12 stalk, and near the tRNA binding site of the peptidyltransferase center. The polypeptide is Large ribosomal subunit protein uL6 (Allorhizobium ampelinum (strain ATCC BAA-846 / DSM 112012 / S4) (Agrobacterium vitis (strain S4))).